A 57-amino-acid chain; its full sequence is MPRDIIILECTEAKAEGKPTSRYVTTRNKKSLRTPGRLEKIKYNPFLKRRTLHREMR.

It belongs to the bacterial ribosomal protein bL33 family.

The protein is Large ribosomal subunit protein bL33 of Akkermansia muciniphila (strain ATCC BAA-835 / DSM 22959 / JCM 33894 / BCRC 81048 / CCUG 64013 / CIP 107961 / Muc).